Reading from the N-terminus, the 385-residue chain is tRNA-specific 2-thiouridylase MnmA (385 aa).

ATP is bound by residues 29 to 36 (GLSGGVDS) and Leu55. Residue Cys116 is the Nucleophile of the active site. An intrachain disulfide couples Cys116 to Cys225. Residue Gly141 coordinates ATP. Residues 175 to 177 (KDQ) are interaction with tRNA. The active-site Cysteine persulfide intermediate is the Cys225. The interaction with tRNA stretch occupies residues 330–331 (RY).

It belongs to the MnmA/TRMU family.

It is found in the cytoplasm. It catalyses the reaction S-sulfanyl-L-cysteinyl-[protein] + uridine(34) in tRNA + AH2 + ATP = 2-thiouridine(34) in tRNA + L-cysteinyl-[protein] + A + AMP + diphosphate + H(+). Its function is as follows. Catalyzes the 2-thiolation of uridine at the wobble position (U34) of tRNA, leading to the formation of s(2)U34. In Prochlorococcus marinus (strain MIT 9301), this protein is tRNA-specific 2-thiouridylase MnmA.